The sequence spans 75 residues: DNA-directed RNA polymerase subunit epsilon (75 aa).

It belongs to the RNA polymerase subunit epsilon family. In terms of assembly, RNAP is composed of a core of 2 alpha, a beta and a beta' subunit. The core is associated with a delta subunit, and at least one of epsilon or omega. When a sigma factor is associated with the core the holoenzyme is formed, which can initiate transcription.

The enzyme catalyses RNA(n) + a ribonucleoside 5'-triphosphate = RNA(n+1) + diphosphate. Functionally, a non-essential component of RNA polymerase (RNAP). The sequence is that of DNA-directed RNA polymerase subunit epsilon from Lactobacillus gasseri (strain ATCC 33323 / DSM 20243 / BCRC 14619 / CIP 102991 / JCM 1131 / KCTC 3163 / NCIMB 11718 / NCTC 13722 / AM63).